The following is a 778-amino-acid chain: Protein PHOTOPERIODIC CONTROL OF HYPOCOTYL 1 (778 aa).

Disordered regions lie at residues 74 to 95 (QKRE…VGSS), 186 to 283 (HNRG…NSAT), and 316 to 335 (KTSP…KEAS). The span at 198-212 (SSKDTQEDGPRKNES) shows a compositional bias: basic and acidic residues. Positions 230-247 (SGSISSSSTKGKGIKGYS) are enriched in low complexity. Positions 265-275 (PDRENSVDGHQ) are enriched in basic and acidic residues. Polar residues predominate over residues 317-326 (TSPSDSSETK). The region spanning 470–505 (WPLLPNDLLELIMGHLETSFEIFLFRSVCSSWRSVV) is the F-box domain.

Interacts with light-activated phyB. Binds directly to PIF1 and COP1. In terms of processing, ubiquitinated by COP1 in darkness; this leads to proteasomal degradation. As to expression, mainly expressed in cotyledons, hypocotyls, leaves and roots.

It localises to the nucleus. Together with PCHL, regulates growth and development adaptation to the ambient environment by controlling negatively phytochrome B (phyB) dark reversion, a temperature-dependent thermal relaxation process during which phyB reverts from the active to the inactive state. Contributes to red (R) light-triggered photomorphogenesis. Promotes various light responses such as seed germination, hypocotyl gravitropism and chlorophyll biosynthesis, via direct interaction with PIF1 and COP1. Prevents DNA-binding ability of PIF1 to negatively regulate the expressions of its target genes. Facilitates the physical interaction between phyB and PIF1 and the subsequent light-induced degradation of PIF1. The chain is Protein PHOTOPERIODIC CONTROL OF HYPOCOTYL 1 from Arabidopsis thaliana (Mouse-ear cress).